Reading from the N-terminus, the 135-residue chain is Large ribosomal subunit protein uL22 (135 aa).

The segment at 112–135 (KKPEKKKLKAKSAKTEEAPKAAEV) is disordered. Over residues 124 to 135 (AKTEEAPKAAEV) the composition is skewed to basic and acidic residues.

The protein belongs to the universal ribosomal protein uL22 family. Part of the 50S ribosomal subunit.

Its function is as follows. This protein binds specifically to 23S rRNA; its binding is stimulated by other ribosomal proteins, e.g. L4, L17, and L20. It is important during the early stages of 50S assembly. It makes multiple contacts with different domains of the 23S rRNA in the assembled 50S subunit and ribosome. In terms of biological role, the globular domain of the protein is located near the polypeptide exit tunnel on the outside of the subunit, while an extended beta-hairpin is found that lines the wall of the exit tunnel in the center of the 70S ribosome. The sequence is that of Large ribosomal subunit protein uL22 from Brachyspira hyodysenteriae (strain ATCC 49526 / WA1).